Consider the following 246-residue polypeptide: Short chain dehydrogenase/reductase dmxR12 (246 aa).

The NADP(+) site is built by isoleucine 15, serine 34, lysine 125, and lysine 164. Lysine 164 functions as the Lowers pKa of active site Tyr in the catalytic mechanism.

Belongs to the short-chain dehydrogenases/reductases (SDR) family.

The protein operates within secondary metabolite biosynthesis. In terms of biological role, short chain dehydrogenase/reductase; part of the gene cluster that mediates the biosynthesis of the dimeric xanthones cryptosporioptides. The pathway begins with the synthesis of atrochrysone thioester by the polyketide synthase dmx-nrPKS. The atrochrysone carboxyl ACP thioesterase dmxR1 then breaks the thioester bond and releases the atrochrysone carboxylic acid from dmx-nrPKS. Atrochrysone carboxylic acid is decarboxylated by the decarboxylase dmxR15, and oxidized by the anthrone oxygenase dmxR16 to yield emodin. Emodin is then reduced to emodin hydroquinone by the oxidoreductase dmxR7. A-ring reduction by the short chain dehydrogenase dmxR18, dehydration by the scytalone dehydratase-like protein dmxR17 and probable spontaneous re-oxidation, results in overall deoxygenation to chrysophanol. Baeyer-Villiger oxidation by the Baeyer-Villiger monooxygenase (BVMO) dmxR6 then yields monodictylactone in equilibrium with monodictyphenone. In the case of the cryptosporioptides biosynthesis, monodictylactone is reduced at C-12 to an alcohol (by the short chain dehydrogenases dmxR12 or dmxR8) and hydroxylated at C-5 by dmxR9, yielding the electron-rich aromatic which could eliminate H(2)O to form the ortho-quinonemethide, followed by tautomerisation to paraquinone and complete the formal reduction to produce the 10-methylgroup. Conjugate addition of C-4a-OH to the resulting paraquinone by the monooxygenase dmxR10 then gives cyclohexadienone, which is then reduced at C-5 by the short chain dehydrogenase dmxR3 to give the dihydroxanthone. The 6,7-epoxide in the cryptosporioptides could be introduced by the cytochrome P450 monooxygenase dmxL3. The highly reducing PKS dmxL2 manufactures butyrate, which is further carboxylated by dmxL1 to form ethylmalonate. It is not yet clear whether the carboxylation occurs while the butyrate is attached to the ACP of dmxL2, but this unusual fungal metabolite could then be esterified to O-5 by the O-acetyltransferase dmxR13. Finally, dimerization performed by dmxR5 gives the observed dimers cryptosporioptides A, B and C as the final products of the pathway. The protein is Short chain dehydrogenase/reductase dmxR12 of Cryptosporiopsis sp. (strain 8999).